The sequence spans 211 residues: ATP phosphoribosyltransferase (211 aa).

The protein belongs to the ATP phosphoribosyltransferase family. Short subfamily. Heteromultimer composed of HisG and HisZ subunits.

It localises to the cytoplasm. It catalyses the reaction 1-(5-phospho-beta-D-ribosyl)-ATP + diphosphate = 5-phospho-alpha-D-ribose 1-diphosphate + ATP. It participates in amino-acid biosynthesis; L-histidine biosynthesis; L-histidine from 5-phospho-alpha-D-ribose 1-diphosphate: step 1/9. Catalyzes the condensation of ATP and 5-phosphoribose 1-diphosphate to form N'-(5'-phosphoribosyl)-ATP (PR-ATP). Has a crucial role in the pathway because the rate of histidine biosynthesis seems to be controlled primarily by regulation of HisG enzymatic activity. In Bacillus cereus (strain G9842), this protein is ATP phosphoribosyltransferase.